The chain runs to 178 residues: MVAMPTAWCSIALALLLALHEGKGQVAAAPDQPAPSHRARASHLRPRRCSCSSWLDKECVYFCHLDIIWVNTPGQTAPYGLGNPPRRRRRSLPKRCECSSGRDPACATFCHRRPKPEAVVVPGSGPPPDVFQAGRARPSAGELLQQLRDISAAKSHFARRQQVAVRELRPTHSRRWKR.

The N-terminal stretch at 1–26 is a signal peptide; sequence MVAMPTAWCSIALALLLALHEGKGQV. A propeptide spanning residues 27 to 46 is cleaved from the precursor; sequence AAAPDQPAPSHRARASHLRP. Cystine bridges form between cysteine 49–cysteine 63 and cysteine 51–cysteine 59. A propeptide spanning residues 70–178 is cleaved from the precursor; it reads VNTPGQTAPY…RPTHSRRWKR (109 aa). Positions 96-111 are endothelin-like; sequence CECSSGRDPACATFCH.

This sequence belongs to the endothelin/sarafotoxin family.

The protein localises to the secreted. Its function is as follows. Endothelins are endothelium-derived vasoconstrictor peptides. The protein is Endothelin-2 (EDN2) of Felis catus (Cat).